The chain runs to 189 residues: Peptidyl-tRNA hydrolase (189 aa).

Tyr14 is a binding site for tRNA. The Proton acceptor role is filled by His19. Residues Tyr64, Asn66, and Asn112 each contribute to the tRNA site.

This sequence belongs to the PTH family. As to quaternary structure, monomer.

Its subcellular location is the cytoplasm. The catalysed reaction is an N-acyl-L-alpha-aminoacyl-tRNA + H2O = an N-acyl-L-amino acid + a tRNA + H(+). Functionally, hydrolyzes ribosome-free peptidyl-tRNAs (with 1 or more amino acids incorporated), which drop off the ribosome during protein synthesis, or as a result of ribosome stalling. In terms of biological role, catalyzes the release of premature peptidyl moieties from peptidyl-tRNA molecules trapped in stalled 50S ribosomal subunits, and thus maintains levels of free tRNAs and 50S ribosomes. This chain is Peptidyl-tRNA hydrolase, found in Clostridium botulinum (strain ATCC 19397 / Type A).